Consider the following 264-residue polypeptide: Thymidylate synthase (264 aa).

Arg21 is a dUMP binding site. A (6R)-5,10-methylene-5,6,7,8-tetrahydrofolate-binding site is contributed by His51. Position 126-127 (126-127) interacts with dUMP; it reads RR. Cys146 functions as the Nucleophile in the catalytic mechanism. Residues 166-169, Asn177, and 207-209 each bind dUMP; these read RSAD and HLY. Residue Asp169 coordinates (6R)-5,10-methylene-5,6,7,8-tetrahydrofolate. Ala263 contacts (6R)-5,10-methylene-5,6,7,8-tetrahydrofolate.

Belongs to the thymidylate synthase family. Bacterial-type ThyA subfamily. Homodimer.

The protein localises to the cytoplasm. The catalysed reaction is dUMP + (6R)-5,10-methylene-5,6,7,8-tetrahydrofolate = 7,8-dihydrofolate + dTMP. Its pathway is pyrimidine metabolism; dTTP biosynthesis. Catalyzes the reductive methylation of 2'-deoxyuridine-5'-monophosphate (dUMP) to 2'-deoxythymidine-5'-monophosphate (dTMP) while utilizing 5,10-methylenetetrahydrofolate (mTHF) as the methyl donor and reductant in the reaction, yielding dihydrofolate (DHF) as a by-product. This enzymatic reaction provides an intracellular de novo source of dTMP, an essential precursor for DNA biosynthesis. The polypeptide is Thymidylate synthase (Stutzerimonas stutzeri (strain A1501) (Pseudomonas stutzeri)).